The chain runs to 721 residues: Protein mu-NS (721 aa).

The interaction with sigma-NS stretch occupies residues 1–13; it reads MASFKGFSVNTVP. The tract at residues 1 to 38 is RNA-binding; it reads MASFKGFSVNTVPVSKAKRDISSLAATPGIRSQPFTPS. The segment at 14–40 is interaction with mu-2; sequence VSKAKRDISSLAATPGIRSQPFTPSVD. The tract at residues 471 to 721 is involved in the formation of factory-like inclusions; it reads SSDMVDGIKL…IDFSVPTDEL (251 aa). 2 coiled-coil regions span residues 523 to 560 and 628 to 686; these read LLSQ…SAQA and QMNG…NQRQ.

It belongs to the orthoreovirus mu-NS protein family. In terms of assembly, interacts with mu-2. Interacts with sigma-NS; in viral factories. Interacts with the inner capsid proteins lambda-1 and sigma-2, and outer capsid protein lambda-2; in viral factories. In terms of processing, the N-terminus is blocked.

The protein localises to the host cytoplasm. Its function is as follows. Non-structural protein implicated with protein sigma-NS in forming the matrix of viral factories, which are large inclusions in the host cytoplasm where replication intermediates are assembled and viral RNA replication takes place. Together with mu-2, recruits the other core proteins to these factories. The polypeptide is Protein mu-NS (M3) (Mammalia (T1L)).